A 159-amino-acid chain; its full sequence is NADH-quinone oxidoreductase subunit I (159 aa).

4Fe-4S ferredoxin-type domains lie at 51 to 80 (RRYE…IEAD) and 90 to 119 (TRYD…EGPN). [4Fe-4S] cluster-binding residues include C60, C63, C66, C70, C99, C102, C105, and C109.

Belongs to the complex I 23 kDa subunit family. As to quaternary structure, NDH-1 is composed of 14 different subunits. Subunits NuoA, H, J, K, L, M, N constitute the membrane sector of the complex. It depends on [4Fe-4S] cluster as a cofactor.

It is found in the cell inner membrane. It carries out the reaction a quinone + NADH + 5 H(+)(in) = a quinol + NAD(+) + 4 H(+)(out). Functionally, NDH-1 shuttles electrons from NADH, via FMN and iron-sulfur (Fe-S) centers, to quinones in the respiratory chain. The immediate electron acceptor for the enzyme in this species is believed to be ubiquinone. Couples the redox reaction to proton translocation (for every two electrons transferred, four hydrogen ions are translocated across the cytoplasmic membrane), and thus conserves the redox energy in a proton gradient. This is NADH-quinone oxidoreductase subunit I from Rickettsia felis (strain ATCC VR-1525 / URRWXCal2) (Rickettsia azadi).